Here is a 341-residue protein sequence, read N- to C-terminus: Putative amino-acid ABC transporter-binding protein YhdW (341 aa).

The N-terminal stretch at 1 to 19 is a signal peptide; that stretch reads MKKMMIATLAAASVLLAVA.

Belongs to the bacterial solute-binding protein 3 family.

The protein resides in the periplasm. Probably part of the binding-protein-dependent transport system YdhWXYZ for an amino acid. The sequence is that of Putative amino-acid ABC transporter-binding protein YhdW (yhdW) from Escherichia coli O157:H7.